A 213-amino-acid chain; its full sequence is 3-isopropylmalate dehydratase small subunit (213 aa).

This sequence belongs to the LeuD family. LeuD type 1 subfamily. As to quaternary structure, heterodimer of LeuC and LeuD.

The catalysed reaction is (2R,3S)-3-isopropylmalate = (2S)-2-isopropylmalate. It functions in the pathway amino-acid biosynthesis; L-leucine biosynthesis; L-leucine from 3-methyl-2-oxobutanoate: step 2/4. Catalyzes the isomerization between 2-isopropylmalate and 3-isopropylmalate, via the formation of 2-isopropylmaleate. The sequence is that of 3-isopropylmalate dehydratase small subunit from Neisseria meningitidis serogroup B (strain ATCC BAA-335 / MC58).